Consider the following 56-residue polypeptide: Serine protease inhibitor Kazal-type 1 (56 aa).

The Kazal-like domain maps to 3 to 56 (PQREATCTSEVSGCPKIYNPVCGTDGITYSNECVLCSENKKRQTPVLIQKSGPC). Intrachain disulfides connect Cys9–Cys38, Cys16–Cys35, and Cys24–Cys56.

Its subcellular location is the secreted. Serine protease inhibitor which exhibits anti-trypsin activity. In the pancreas, protects against trypsin-catalyzed premature activation of zymogens. In terms of biological role, in the male reproductive tract, binds to sperm heads where it modulates sperm capacitance by inhibiting calcium uptake and nitrogen oxide (NO) production. The chain is Serine protease inhibitor Kazal-type 1 (SPINK1) from Sus scrofa (Pig).